Here is a 377-residue protein sequence, read N- to C-terminus: 4-hydroxy-3-methylbut-2-en-1-yl diphosphate synthase (flavodoxin) (377 aa).

[4Fe-4S] cluster contacts are provided by C270, C273, C305, and E312.

This sequence belongs to the IspG family. The cofactor is [4Fe-4S] cluster.

The enzyme catalyses (2E)-4-hydroxy-3-methylbut-2-enyl diphosphate + oxidized [flavodoxin] + H2O + 2 H(+) = 2-C-methyl-D-erythritol 2,4-cyclic diphosphate + reduced [flavodoxin]. Its pathway is isoprenoid biosynthesis; isopentenyl diphosphate biosynthesis via DXP pathway; isopentenyl diphosphate from 1-deoxy-D-xylulose 5-phosphate: step 5/6. Converts 2C-methyl-D-erythritol 2,4-cyclodiphosphate (ME-2,4cPP) into 1-hydroxy-2-methyl-2-(E)-butenyl 4-diphosphate. The polypeptide is 4-hydroxy-3-methylbut-2-en-1-yl diphosphate synthase (flavodoxin) (Bacillus subtilis (strain 168)).